Here is a 360-residue protein sequence, read N- to C-terminus: Peptide chain release factor 1 (360 aa).

Position 235 is an N5-methylglutamine (glutamine 235). The interval 286-311 (QAQAQADTRRNLLGSGDRSDKIRTYN) is disordered.

The protein belongs to the prokaryotic/mitochondrial release factor family. In terms of processing, methylated by PrmC. Methylation increases the termination efficiency of RF1.

Its subcellular location is the cytoplasm. Its function is as follows. Peptide chain release factor 1 directs the termination of translation in response to the peptide chain termination codons UAG and UAA. This chain is Peptide chain release factor 1, found in Histophilus somni (strain 2336) (Haemophilus somnus).